We begin with the raw amino-acid sequence, 129 residues long: Small ribosomal subunit protein uS11 (129 aa).

The protein belongs to the universal ribosomal protein uS11 family. Part of the 30S ribosomal subunit.

Located on the platform of the 30S subunit. The protein is Small ribosomal subunit protein uS11 of Haloarcula marismortui (strain ATCC 43049 / DSM 3752 / JCM 8966 / VKM B-1809) (Halobacterium marismortui).